The following is a 998-amino-acid chain: Collagen alpha-1(I) chain (998 aa).

The disordered stretch occupies residues 1-998 (SYGYDEKGGV…GPPGPPGPPG (998 aa)). Residues 9-22 (GVSVPGPMGPSGPR) show a composition bias toward low complexity. 4-hydroxyproline occurs at positions 25, 28, 30, 39, 42, 45, 59, 74, 80, 89, and 95. Positions 62–76 (NGDDGEAGKPGRPGE) are enriched in basic and acidic residues. 5-hydroxylysine; alternate is present on Lys-98. Lys-98 carries an O-linked (Gal...) hydroxylysine; alternate glycan. At Ser-104 the chain carries Phosphoserine. Low complexity predominate over residues 112 to 128 (DAGPAGPKGEPGSPGEN). Residues Pro-122, Pro-125, Pro-131, Pro-140, Pro-146, Pro-167, Pro-176, Pro-179, Pro-206, Pro-209, Pro-221, Pro-227, Pro-236, Pro-242, Pro-245, and Pro-260 each carry the 4-hydroxyproline modification. The segment covering 146–164 (PGASGPAGARGNDGATGAA) has biased composition (low complexity). Residues 166 to 178 (PPGPTGPAGPPGF) show a composition bias toward pro residues. Positions 212–251 (AGAAGPAGNPGADGQPGAKGANGAPGIAGAPGFPGARGPS) are enriched in low complexity. Residue Lys-263 is modified to 5-hydroxylysine. A 4-hydroxyproline mark is found at Pro-269, Pro-272, Pro-284, Pro-293, Pro-308, Pro-314, Pro-323, and Pro-329. Gly residues predominate over residues 318–327 (GERGGPGSRG). Residue Lys-338 is modified to 5-hydroxylysine. 4-hydroxyproline occurs at positions 347, 356, 362, 368, 377, 380, 389, 398, 404, 416, 425, 434, 437, 455, 472, 478, 484, 490, 496, 502, 514, 523, 537, 543, and 552. Residues 371–397 (KGLTGSPGSPGPDGKTGPPGPAGQDGR) show a composition bias toward low complexity. A compositionally biased stretch (low complexity) spans 406–425 (ARGQAGVMGFPGPKGAAGEP). Residues 484–493 (PGEAGKPGEQ) are compositionally biased toward low complexity. Lys-564 is subject to 5-hydroxylysine. 4-hydroxyproline occurs at positions 570, 585, and 591. The span at 597–611 (SGPSGPAGPTGARGA) shows a compositional bias: low complexity. Ser-600 carries the post-translational modification Phosphoserine. 8 positions are modified to 4-hydroxyproline: Pro-612, Pro-618, Pro-621, Pro-630, Pro-636, Pro-654, Pro-663, and Pro-672. The span at 624–651 (AGFAGPPGADGQPGAKGEPGDAGAKGDA) shows a compositional bias: low complexity. Positions 653-665 (PPGPAGPTGPPGP) are enriched in pro residues. Lys-675 carries the post-translational modification 5-hydroxylysine. The span at 680–696 (SAGPPGATGFPGAAGRV) shows a compositional bias: low complexity. 2 positions are modified to 4-hydroxyproline: Pro-684 and Pro-690. Pro-698 carries the 3-hydroxyproline modification. A 4-hydroxyproline mark is found at Pro-699, Pro-708, Pro-711, Pro-732, Pro-741, Pro-749, Pro-758, Pro-776, Pro-785, Pro-788, Pro-794, Pro-809, Pro-815, Pro-821, Pro-830, and Pro-836. Positions 725-734 (ETGPAGRPGE) are enriched in low complexity. Residues 746–758 (KGSPGADGPAGAP) show a composition bias toward low complexity. Residues 808–818 (PPGPMGPPGLA) show a composition bias toward pro residues. Residue Lys-845 is modified to 5-hydroxylysine. Residues 853–868 (PGPPGAPGAPGAPGPV) are compositionally biased toward pro residues. 4-hydroxyproline occurs at positions 856, 859, and 862. A compositionally biased stretch (low complexity) spans 889-903 (AGPAGARGPAGPQGP). Residues 904–918 (RGDKGETGEQGDRGI) are compositionally biased toward basic and acidic residues. Lys-907 is modified (5-hydroxylysine). Residue Lys-919 is modified to 5-hydroxylysine; alternate. The O-linked (Gal...) hydroxylysine; alternate glycan is linked to Lys-919. Pro-934, Pro-937, Pro-955, and Pro-970 each carry 4-hydroxyproline. The span at 937-970 (PGEQGPSGASGPAGPRGPPGSAGSPGKDGLNGLP) shows a compositional bias: low complexity. Pro-975 carries the post-translational modification 3-hydroxyproline. Pro-976 carries the post-translational modification 4-hydroxyproline. The segment covering 988 to 998 (VGPPGPPGPPG) has biased composition (pro residues). A 3-hydroxyproline modification is found at Pro-990. The residue at position 991 (Pro-991) is a 4-hydroxyproline. Pro-993 carries the post-translational modification 3-hydroxyproline. At Pro-994 the chain carries 4-hydroxyproline. The residue at position 996 (Pro-996) is a 3-hydroxyproline. Pro-997 is subject to 4-hydroxyproline.

Belongs to the fibrillar collagen family. As to quaternary structure, trimers of one alpha 2(I) and two alpha 1(I) chains. Contains mostly 4-hydroxyproline. Proline residues at the third position of the tripeptide repeating unit (G-X-Y) are hydroxylated in some or all of the chains. In terms of processing, contains 3-hydroxyproline at a few sites. This modification occurs on the first proline residue in the sequence motif Gly-Pro-Hyp, where Hyp is 4-hydroxyproline. Post-translationally, lysine residues at the third position of the tripeptide repeating unit (G-X-Y) are 5-hydroxylated in some or all of the chains. O-glycosylated on hydroxylated lysine residues. The O-linked glycan consists of a Glc-Gal disaccharide. Expressed in bones.

It is found in the secreted. Its subcellular location is the extracellular space. The protein localises to the extracellular matrix. Its function is as follows. Type I collagen is a member of group I collagen (fibrillar forming collagen). The chain is Collagen alpha-1(I) chain from Nothrotheriops shastensis (Shasta ground sloth).